Consider the following 1157-residue polypeptide: uncharacterized protein (1157 aa).

The signal sequence occupies residues 1–18 (MNRNIFITLLISLLALSG). Cys-19 is lipidated: N-palmitoyl cysteine. The S-diacylglycerol cysteine moiety is linked to residue Cys-19. The next 4 membrane-spanning stretches (helical) occupy residues 292–312 (LSVS…FLIG), 394–414 (LGFI…LLIF), 423–443 (ALIT…FMLF), and 458–478 (ISYA…GMII). The disordered stretch occupies residues 1134–1157 (QYQKPVENSGRKLRKLEDHLRNMK). Basic and acidic residues predominate over residues 1148-1157 (KLEDHLRNMK).

The protein belongs to the TrbL/VirB6 family.

The protein resides in the cell membrane. This is an uncharacterized protein from Rickettsia bellii (strain RML369-C).